The chain runs to 754 residues: Phosphoribosylformylglycinamidine synthase subunit PurL (754 aa).

Residue His52 is part of the active site. Tyr55 and Lys95 together coordinate ATP. Glu97 is a Mg(2+) binding site. Residues 98–101 (SHNH) and Arg120 each bind substrate. The active-site Proton acceptor is His99. Mg(2+) is bound at residue Asp121. Gln244 is a binding site for substrate. Position 272 (Asp272) interacts with Mg(2+). Position 316 to 318 (316 to 318 (ESQ)) interacts with substrate. 2 residues coordinate ATP: Asn504 and Gly541. Asn542 contacts Mg(2+). Residue Ser544 coordinates substrate.

Belongs to the FGAMS family. As to quaternary structure, monomer. Part of the FGAM synthase complex composed of 1 PurL, 1 PurQ and 2 PurS subunits.

It localises to the cytoplasm. It catalyses the reaction N(2)-formyl-N(1)-(5-phospho-beta-D-ribosyl)glycinamide + L-glutamine + ATP + H2O = 2-formamido-N(1)-(5-O-phospho-beta-D-ribosyl)acetamidine + L-glutamate + ADP + phosphate + H(+). It participates in purine metabolism; IMP biosynthesis via de novo pathway; 5-amino-1-(5-phospho-D-ribosyl)imidazole from N(2)-formyl-N(1)-(5-phospho-D-ribosyl)glycinamide: step 1/2. Functionally, part of the phosphoribosylformylglycinamidine synthase complex involved in the purines biosynthetic pathway. Catalyzes the ATP-dependent conversion of formylglycinamide ribonucleotide (FGAR) and glutamine to yield formylglycinamidine ribonucleotide (FGAM) and glutamate. The FGAM synthase complex is composed of three subunits. PurQ produces an ammonia molecule by converting glutamine to glutamate. PurL transfers the ammonia molecule to FGAR to form FGAM in an ATP-dependent manner. PurS interacts with PurQ and PurL and is thought to assist in the transfer of the ammonia molecule from PurQ to PurL. The chain is Phosphoribosylformylglycinamidine synthase subunit PurL from Salinibacter ruber (strain DSM 13855 / M31).